The primary structure comprises 381 residues: Heme A synthase (381 aa).

The tract at residues 1–23 is disordered; sequence MARRPVFQEVTETTPPGTTPSGG. The segment covering 11 to 23 has biased composition (low complexity); sequence TETTPPGTTPSGG. 8 helical membrane-spanning segments follow: residues 34 to 54, 120 to 140, 151 to 171, 185 to 205, 228 to 248, 285 to 305, 319 to 339, and 342 to 362; these read GAIR…IALG, RLLG…FLAT, LLLL…MVHS, LATH…YVLA, TTGL…VAGI, LVQF…VVVF, AYVA…MNVL, and SPLP…TLIL. A heme-binding site is contributed by His290. Position 350 (His350) interacts with heme.

It belongs to the COX15/CtaA family. Type 2 subfamily. As to quaternary structure, interacts with CtaB. The cofactor is heme b.

The protein resides in the cell membrane. It catalyses the reaction Fe(II)-heme o + 2 A + H2O = Fe(II)-heme a + 2 AH2. The protein operates within porphyrin-containing compound metabolism; heme A biosynthesis; heme A from heme O: step 1/1. In terms of biological role, catalyzes the conversion of heme O to heme A by two successive hydroxylations of the methyl group at C8. The first hydroxylation forms heme I, the second hydroxylation results in an unstable dihydroxymethyl group, which spontaneously dehydrates, resulting in the formyl group of heme A. This Paracoccus denitrificans (strain Pd 1222) protein is Heme A synthase.